A 315-amino-acid chain; its full sequence is DNA-directed RNA polymerase subunit alpha (315 aa).

Residues 1 to 228 (MIEMEKPKVE…EHLNLFITLK (228 aa)) form an alpha N-terminal domain (alpha-NTD) region. Positions 245-315 (KEKVLEMTIE…LGLGLRPSDE (71 aa)) are alpha C-terminal domain (alpha-CTD).

Belongs to the RNA polymerase alpha chain family. In terms of assembly, homodimer. The RNAP catalytic core consists of 2 alpha, 1 beta, 1 beta' and 1 omega subunit. When a sigma factor is associated with the core the holoenzyme is formed, which can initiate transcription.

The catalysed reaction is RNA(n) + a ribonucleoside 5'-triphosphate = RNA(n+1) + diphosphate. Functionally, DNA-dependent RNA polymerase catalyzes the transcription of DNA into RNA using the four ribonucleoside triphosphates as substrates. The protein is DNA-directed RNA polymerase subunit alpha of Alkaliphilus metalliredigens (strain QYMF).